The following is a 416-amino-acid chain: Serine hydroxymethyltransferase (416 aa).

(6S)-5,6,7,8-tetrahydrofolate-binding positions include Leu121 and 125 to 127; that span reads GHL. Residue Lys230 is modified to N6-(pyridoxal phosphate)lysine.

The protein belongs to the SHMT family. Homodimer. The cofactor is pyridoxal 5'-phosphate.

Its subcellular location is the cytoplasm. The enzyme catalyses (6R)-5,10-methylene-5,6,7,8-tetrahydrofolate + glycine + H2O = (6S)-5,6,7,8-tetrahydrofolate + L-serine. It participates in one-carbon metabolism; tetrahydrofolate interconversion. The protein operates within amino-acid biosynthesis; glycine biosynthesis; glycine from L-serine: step 1/1. In terms of biological role, catalyzes the reversible interconversion of serine and glycine with tetrahydrofolate (THF) serving as the one-carbon carrier. This reaction serves as the major source of one-carbon groups required for the biosynthesis of purines, thymidylate, methionine, and other important biomolecules. Also exhibits THF-independent aldolase activity toward beta-hydroxyamino acids, producing glycine and aldehydes, via a retro-aldol mechanism. This chain is Serine hydroxymethyltransferase, found in Nitrosospira multiformis (strain ATCC 25196 / NCIMB 11849 / C 71).